We begin with the raw amino-acid sequence, 200 residues long: Holliday junction branch migration complex subunit RuvA (200 aa).

The segment at 1-64 (MIGHLRGIIV…EDAHTLYGFH (64 aa)) is domain I. Residues 65–143 (NDHERRLFRA…RWHTNDTPSP (79 aa)) are domain II. The flexible linker stretch occupies residues 144 to 148 (EGLRS). The interval 149–200 (SNTQPTQDAISALMALGYKPQEAKRAIDAIQKPDLSAETLIRLALKQMVLGT) is domain III.

Belongs to the RuvA family. As to quaternary structure, homotetramer. Forms an RuvA(8)-RuvB(12)-Holliday junction (HJ) complex. HJ DNA is sandwiched between 2 RuvA tetramers; dsDNA enters through RuvA and exits via RuvB. An RuvB hexamer assembles on each DNA strand where it exits the tetramer. Each RuvB hexamer is contacted by two RuvA subunits (via domain III) on 2 adjacent RuvB subunits; this complex drives branch migration. In the full resolvosome a probable DNA-RuvA(4)-RuvB(12)-RuvC(2) complex forms which resolves the HJ.

It is found in the cytoplasm. The RuvA-RuvB-RuvC complex processes Holliday junction (HJ) DNA during genetic recombination and DNA repair, while the RuvA-RuvB complex plays an important role in the rescue of blocked DNA replication forks via replication fork reversal (RFR). RuvA specifically binds to HJ cruciform DNA, conferring on it an open structure. The RuvB hexamer acts as an ATP-dependent pump, pulling dsDNA into and through the RuvAB complex. HJ branch migration allows RuvC to scan DNA until it finds its consensus sequence, where it cleaves and resolves the cruciform DNA. The protein is Holliday junction branch migration complex subunit RuvA of Coxiella burnetii (strain CbuG_Q212) (Coxiella burnetii (strain Q212)).